A 190-amino-acid polypeptide reads, in one-letter code: Small ribosomal subunit protein eS7 (190 aa).

The protein belongs to the eukaryotic ribosomal protein eS7 family.

The protein is Small ribosomal subunit protein eS7 (RPS7) of Avicennia marina (Grey mangrove).